Reading from the N-terminus, the 129-residue chain is Small ribosomal subunit protein uS11 (129 aa).

It belongs to the universal ribosomal protein uS11 family. In terms of assembly, part of the 30S ribosomal subunit. Interacts with proteins S7 and S18. Binds to IF-3.

In terms of biological role, located on the platform of the 30S subunit, it bridges several disparate RNA helices of the 16S rRNA. Forms part of the Shine-Dalgarno cleft in the 70S ribosome. The protein is Small ribosomal subunit protein uS11 of Haemophilus influenzae (strain 86-028NP).